We begin with the raw amino-acid sequence, 453 residues long: Gastrin/cholecystokinin type B receptor (453 aa).

At 1 to 57 (MELLKLNRSAQGSGAGPGASLCRAGGALLNSSGAGNLSCEPPRLRGAGTRELELAIR) the chain is on the extracellular side. 3 N-linked (GlcNAc...) asparagine glycosylation sites follow: Asn7, Asn30, and Asn36. The helical transmembrane segment at 58–79 (VTLYAVIFLMSVGGNVLIIVVL) threads the bilayer. The Cytoplasmic segment spans residues 80–87 (GLSRRLRT). The helical transmembrane segment at 88 to 109 (VTNAFLLSLAVSDLLLAVACMP) threads the bilayer. Residues 110-131 (FTLLPNLMGTFIFGTVVCKAVS) lie on the Extracellular side of the membrane. Cys127 and Cys206 are oxidised to a cystine. A helical transmembrane segment spans residues 132 to 150 (YLMGVSVSVSTLSLVAIAL). Residues 151 to 170 (ERYSAICRPLQARVWQTRSH) are Cytoplasmic-facing. The helical transmembrane segment at 171-189 (AARVIIATWMLSGLLMVPY) threads the bilayer. Topologically, residues 190–220 (PVYTAVQPAGGARALQCVHRWPSARVRQTWS) are extracellular. A helical membrane pass occupies residues 221-243 (VLLLLLLFFVPGVVMAVAYGLIS). Residues 244–339 (RELYLGLRFD…KLLAKKRVVR (96 aa)) are Cytoplasmic-facing. The segment at 258 to 286 (SESRVRSQGGLRGGAGPGPAPPNGSCRPE) is disordered. Residues 340 to 361 (MLLVIVVLFFLCWLPLYSANTW) form a helical membrane-spanning segment. At 362–379 (RAFDSSGAHRALSGAPIS) the chain is on the extracellular side. The chain crosses the membrane as a helical span at residues 380 to 400 (FIHLLSYASACVNPLVYCFMH). The Cytoplasmic portion of the chain corresponds to 401–453 (RRFRQACLETCARCCPRPPRARPRPLPDEDPPTPSIASLSRLSYTTISTLGPG). Residue Cys414 is the site of S-palmitoyl cysteine attachment. Residues 422–453 (RPRPLPDEDPPTPSIASLSRLSYTTISTLGPG) are disordered. The span at 435–453 (SIASLSRLSYTTISTLGPG) shows a compositional bias: polar residues.

The protein belongs to the G-protein coupled receptor 1 family. Parietal cells, pancreas, brain and various neoplastic tissues.

The protein localises to the cell membrane. Receptor for gastrin and cholecystokinin. The CCK-B receptors occur throughout the central nervous system where they modulate anxiety, analgesia, arousal, and neuroleptic activity. This receptor mediates its action by association with G proteins that activate a phosphatidylinositol-calcium second messenger system. The polypeptide is Gastrin/cholecystokinin type B receptor (CCKBR) (Canis lupus familiaris (Dog)).